A 198-amino-acid polypeptide reads, in one-letter code: ATP-dependent Clp protease proteolytic subunit (198 aa).

S98 functions as the Nucleophile in the catalytic mechanism. Residue H123 is part of the active site.

Belongs to the peptidase S14 family. Fourteen ClpP subunits assemble into 2 heptameric rings which stack back to back to give a disk-like structure with a central cavity, resembling the structure of eukaryotic proteasomes.

It is found in the cytoplasm. The enzyme catalyses Hydrolysis of proteins to small peptides in the presence of ATP and magnesium. alpha-casein is the usual test substrate. In the absence of ATP, only oligopeptides shorter than five residues are hydrolyzed (such as succinyl-Leu-Tyr-|-NHMec, and Leu-Tyr-Leu-|-Tyr-Trp, in which cleavage of the -Tyr-|-Leu- and -Tyr-|-Trp bonds also occurs).. Functionally, cleaves peptides in various proteins in a process that requires ATP hydrolysis. Has a chymotrypsin-like activity. Plays a major role in the degradation of misfolded proteins. This is ATP-dependent Clp protease proteolytic subunit from Halothermothrix orenii (strain H 168 / OCM 544 / DSM 9562).